A 306-amino-acid chain; its full sequence is Ornithine carbamoyltransferase (306 aa).

Carbamoyl phosphate is bound by residues 51–54, Gln-78, Arg-102, and 129–132; these read STRT and HPVQ. L-ornithine is bound by residues Asn-159, Asp-223, and 227-228; that span reads SM. Carbamoyl phosphate contacts are provided by residues 263 to 264 and Arg-291; that span reads CL.

This sequence belongs to the aspartate/ornithine carbamoyltransferase superfamily. OTCase family.

It is found in the cytoplasm. It carries out the reaction carbamoyl phosphate + L-ornithine = L-citrulline + phosphate + H(+). It functions in the pathway amino-acid biosynthesis; L-arginine biosynthesis; L-arginine from L-ornithine and carbamoyl phosphate: step 1/3. Its function is as follows. Reversibly catalyzes the transfer of the carbamoyl group from carbamoyl phosphate (CP) to the N(epsilon) atom of ornithine (ORN) to produce L-citrulline. In Sulfurovum sp. (strain NBC37-1), this protein is Ornithine carbamoyltransferase.